Here is a 341-residue protein sequence, read N- to C-terminus: Long-chain acyl-[acyl-carrier-protein] reductase (341 aa).

It belongs to the short-chain dehydrogenases/reductases (SDR) family. A divalent metal cation is required as a cofactor.

The enzyme catalyses a long-chain fatty aldehyde + holo-[ACP] + NADP(+) = a long-chain fatty acyl-[ACP] + NADPH + H(+). It catalyses the reaction a long-chain fatty aldehyde + holo-[ACP] + NAD(+) = a long-chain fatty acyl-[ACP] + NADH + H(+). Its function is as follows. Catalyzes the NADP-dependent reduction of long-chain acyl-ACP to the corresponding fatty aldehyde. Involved in the biosynthesis of alkanes, mainly heptadecane and pentadecane, by producing the fatty aldehydes used by aldehyde decarbonylase. The protein is Long-chain acyl-[acyl-carrier-protein] reductase of Synechococcus elongatus (strain ATCC 33912 / PCC 7942 / FACHB-805) (Anacystis nidulans R2).